Here is a 620-residue protein sequence, read N- to C-terminus: Chaperone protein HscA homolog (620 aa).

Belongs to the heat shock protein 70 family.

Functionally, chaperone involved in the maturation of iron-sulfur cluster-containing proteins. Has a low intrinsic ATPase activity which is markedly stimulated by HscB. The polypeptide is Chaperone protein HscA homolog (Bordetella petrii (strain ATCC BAA-461 / DSM 12804 / CCUG 43448)).